Here is a 590-residue protein sequence, read N- to C-terminus: UvrABC system protein C (590 aa).

The region spanning 14–91 (DQPGCYLMKD…IKKYDPKYNV (78 aa)) is the GIY-YIG domain. The region spanning 196-231 (NEIKKELEAKMAEAAEKLEFERAKEFRDQLAHIEST) is the UVR domain.

Belongs to the UvrC family. As to quaternary structure, interacts with UvrB in an incision complex.

Its subcellular location is the cytoplasm. Its function is as follows. The UvrABC repair system catalyzes the recognition and processing of DNA lesions. UvrC both incises the 5' and 3' sides of the lesion. The N-terminal half is responsible for the 3' incision and the C-terminal half is responsible for the 5' incision. The polypeptide is UvrABC system protein C (Bacillus velezensis (strain DSM 23117 / BGSC 10A6 / LMG 26770 / FZB42) (Bacillus amyloliquefaciens subsp. plantarum)).